Reading from the N-terminus, the 513-residue chain is Maturase K (513 aa).

The protein belongs to the intron maturase 2 family. MatK subfamily.

Its subcellular location is the plastid. It localises to the chloroplast. Its function is as follows. Usually encoded in the trnK tRNA gene intron. Probably assists in splicing its own and other chloroplast group II introns. The chain is Maturase K from Saccharum officinarum (Sugarcane).